Reading from the N-terminus, the 201-residue chain is UPF0301 protein Avi_1069 (201 aa).

This sequence belongs to the UPF0301 (AlgH) family.

In Allorhizobium ampelinum (strain ATCC BAA-846 / DSM 112012 / S4) (Agrobacterium vitis (strain S4)), this protein is UPF0301 protein Avi_1069.